Consider the following 524-residue polypeptide: Probable metalloreductase AIM14 (524 aa).

7 helical membrane-spanning segments follow: residues 24-44 (VNIKYGYVILALSIVHMVLSI), 69-89 (SIPFWVSTLVWLAIFAFLSIF), 104-121 (RLGRMAYCLVPFTIFISL), 143-163 (WISRLIFATAIGHGLGFLYKW), 179-199 (FLGVTVFALMPVLIFASVNVM), 206-226 (LFYILHNVTLWMFVVLIAFHA), and 230-250 (VPLLAVINLALLGYQIYQRFF). The Ferric oxidoreductase domain maps to 105-222 (LGRMAYCLVP…VTLWMFVVLI (118 aa)). One can recognise an FAD-binding FR-type domain in the interval 248–372 (RFFKSYYLHD…GGSGISFGLP (125 aa)).

It belongs to the ferric reductase (FRE) family. AIM14 subfamily.

It localises to the membrane. In terms of biological role, probable cell surface metalloreductase. May be involved in iron or copper homeostasis. The polypeptide is Probable metalloreductase AIM14 (AIM14) (Scheffersomyces stipitis (strain ATCC 58785 / CBS 6054 / NBRC 10063 / NRRL Y-11545) (Yeast)).